The following is a 170-amino-acid chain: Phosphopantetheine adenylyltransferase (170 aa).

A substrate-binding site is contributed by Thr-18. Residues 18 to 19 (TF) and His-26 contribute to the ATP site. Residues Lys-50, Leu-84, and Arg-98 each contribute to the substrate site. ATP-binding positions include 99 to 101 (GLR), Glu-109, and 134 to 140 (WIYISSS).

It belongs to the bacterial CoaD family. Homohexamer. It depends on Mg(2+) as a cofactor.

The protein resides in the cytoplasm. It catalyses the reaction (R)-4'-phosphopantetheine + ATP + H(+) = 3'-dephospho-CoA + diphosphate. Its pathway is cofactor biosynthesis; coenzyme A biosynthesis; CoA from (R)-pantothenate: step 4/5. Functionally, reversibly transfers an adenylyl group from ATP to 4'-phosphopantetheine, yielding dephospho-CoA (dPCoA) and pyrophosphate. In Desulfotalea psychrophila (strain LSv54 / DSM 12343), this protein is Phosphopantetheine adenylyltransferase.